The sequence spans 126 residues: Aspartate 1-decarboxylase (126 aa).

The active-site Schiff-base intermediate with substrate; via pyruvic acid is the serine 25. Position 25 is a pyruvic acid (Ser) (serine 25). Substrate is bound at residue threonine 57. The active-site Proton donor is tyrosine 58. 73 to 75 (GAA) provides a ligand contact to substrate.

It belongs to the PanD family. Heterooctamer of four alpha and four beta subunits. It depends on pyruvate as a cofactor. In terms of processing, is synthesized initially as an inactive proenzyme, which is activated by self-cleavage at a specific serine bond to produce a beta-subunit with a hydroxyl group at its C-terminus and an alpha-subunit with a pyruvoyl group at its N-terminus.

It is found in the cytoplasm. The catalysed reaction is L-aspartate + H(+) = beta-alanine + CO2. It functions in the pathway cofactor biosynthesis; (R)-pantothenate biosynthesis; beta-alanine from L-aspartate: step 1/1. Functionally, catalyzes the pyruvoyl-dependent decarboxylation of aspartate to produce beta-alanine. The sequence is that of Aspartate 1-decarboxylase from Salmonella choleraesuis (strain SC-B67).